The following is a 317-amino-acid chain: Aspartate carbamoyltransferase catalytic subunit (317 aa).

Carbamoyl phosphate-binding residues include R64 and T65. K92 contacts L-aspartate. Positions 114, 142, and 145 each coordinate carbamoyl phosphate. L-aspartate-binding residues include R176 and R230. The carbamoyl phosphate site is built by G271 and P272.

Belongs to the aspartate/ornithine carbamoyltransferase superfamily. ATCase family. In terms of assembly, heterododecamer (2C3:3R2) of six catalytic PyrB chains organized as two trimers (C3), and six regulatory PyrI chains organized as three dimers (R2).

It carries out the reaction carbamoyl phosphate + L-aspartate = N-carbamoyl-L-aspartate + phosphate + H(+). It functions in the pathway pyrimidine metabolism; UMP biosynthesis via de novo pathway; (S)-dihydroorotate from bicarbonate: step 2/3. In terms of biological role, catalyzes the condensation of carbamoyl phosphate and aspartate to form carbamoyl aspartate and inorganic phosphate, the committed step in the de novo pyrimidine nucleotide biosynthesis pathway. The protein is Aspartate carbamoyltransferase catalytic subunit of Nitratidesulfovibrio vulgaris (strain DP4) (Desulfovibrio vulgaris).